The sequence spans 920 residues: Glutamate receptor 2.2 (920 aa).

An N-terminal signal peptide occupies residues 1-24 (MKNSKLFFRFLFLFFFFCLESSRG). Topologically, residues 25–580 (QDNGKTQVNI…DKFSFLKPLS (556 aa)) are extracellular. Residues asparagine 53, asparagine 204, asparagine 267, asparagine 331, asparagine 342, asparagine 477, and asparagine 542 are each glycosylated (N-linked (GlcNAc...) asparagine). A helical membrane pass occupies residues 581-601 (IELWLTTLVFFFLVGISVWTL). Topologically, residues 602–610 (EHRVNSDFR) are cytoplasmic. The chain crosses the membrane as a helical span at residues 611–631 (GPANYQASTIFWFAFSTMVFA). The Cytoplasmic segment spans residues 632 to 635 (PRER). The helical transmembrane segment at 636-656 (VLSFGARSLVVTWYFVLLVLT) threads the bilayer. Residues 657–830 (QSYTASLASL…VTAIQLGVGS (174 aa)) lie on the Extracellular side of the membrane. N-linked (GlcNAc...) asparagine glycosylation occurs at asparagine 702. A helical transmembrane segment spans residues 831–851 (FWFLFLVVFVVCVLALGKFTF). Residues 852–920 (CFLWKTKGKD…QVNQTDPDCL (69 aa)) are Cytoplasmic-facing.

It belongs to the glutamate-gated ion channel (TC 1.A.10.1) family. In terms of assembly, may form heteromers. As to expression, expressed predominantly in roots.

It localises to the membrane. Functionally, glutamate-gated receptor that probably acts as a non-selective cation channel. May be involved in light-signal transduction and calcium homeostasis via the regulation of calcium influx into cells. The polypeptide is Glutamate receptor 2.2 (GLR2.2) (Arabidopsis thaliana (Mouse-ear cress)).